The sequence spans 345 residues: Phosphate acyltransferase (345 aa).

This sequence belongs to the PlsX family. Homodimer. Probably interacts with PlsY.

It is found in the cytoplasm. The enzyme catalyses a fatty acyl-[ACP] + phosphate = an acyl phosphate + holo-[ACP]. It participates in lipid metabolism; phospholipid metabolism. Catalyzes the reversible formation of acyl-phosphate (acyl-PO(4)) from acyl-[acyl-carrier-protein] (acyl-ACP). This enzyme utilizes acyl-ACP as fatty acyl donor, but not acyl-CoA. This is Phosphate acyltransferase from Dichelobacter nodosus (strain VCS1703A).